A 390-amino-acid polypeptide reads, in one-letter code: Formate-dependent phosphoribosylglycinamide formyltransferase (390 aa).

N(1)-(5-phospho-beta-D-ribosyl)glycinamide-binding positions include 18-19 (EL) and Glu-78. Residues Arg-110, Lys-151, 156–161 (SSGKGQ), 191–194 (EEFL), and Glu-199 each bind ATP. The ATP-grasp domain occupies 115–305 (DLASKELNIK…EFELHLRAFL (191 aa)). The Mg(2+) site is built by Glu-264 and Glu-276. N(1)-(5-phospho-beta-D-ribosyl)glycinamide-binding positions include Asp-283, Lys-353, and 360–361 (RR).

This sequence belongs to the PurK/PurT family. Homodimer.

It carries out the reaction N(1)-(5-phospho-beta-D-ribosyl)glycinamide + formate + ATP = N(2)-formyl-N(1)-(5-phospho-beta-D-ribosyl)glycinamide + ADP + phosphate + H(+). Its pathway is purine metabolism; IMP biosynthesis via de novo pathway; N(2)-formyl-N(1)-(5-phospho-D-ribosyl)glycinamide from N(1)-(5-phospho-D-ribosyl)glycinamide (formate route): step 1/1. In terms of biological role, involved in the de novo purine biosynthesis. Catalyzes the transfer of formate to 5-phospho-ribosyl-glycinamide (GAR), producing 5-phospho-ribosyl-N-formylglycinamide (FGAR). Formate is provided by PurU via hydrolysis of 10-formyl-tetrahydrofolate. This Prochlorococcus marinus subsp. pastoris (strain CCMP1986 / NIES-2087 / MED4) protein is Formate-dependent phosphoribosylglycinamide formyltransferase.